The chain runs to 262 residues: 3-methyl-2-oxobutanoate hydroxymethyltransferase (262 aa).

Mg(2+) contacts are provided by aspartate 42 and aspartate 81. Residues 42–43 (DS), aspartate 81, and lysine 110 each bind 3-methyl-2-oxobutanoate. Residue glutamate 112 coordinates Mg(2+). Glutamate 180 acts as the Proton acceptor in catalysis.

This sequence belongs to the PanB family. In terms of assembly, homodecamer; pentamer of dimers. Requires Mg(2+) as cofactor.

It localises to the cytoplasm. The enzyme catalyses 3-methyl-2-oxobutanoate + (6R)-5,10-methylene-5,6,7,8-tetrahydrofolate + H2O = 2-dehydropantoate + (6S)-5,6,7,8-tetrahydrofolate. It functions in the pathway cofactor biosynthesis; (R)-pantothenate biosynthesis; (R)-pantoate from 3-methyl-2-oxobutanoate: step 1/2. Functionally, catalyzes the reversible reaction in which hydroxymethyl group from 5,10-methylenetetrahydrofolate is transferred onto alpha-ketoisovalerate to form ketopantoate. The chain is 3-methyl-2-oxobutanoate hydroxymethyltransferase from Legionella pneumophila (strain Lens).